The sequence spans 160 residues: Cyanate hydratase (160 aa).

Residues R100, E103, and S126 contribute to the active site.

This sequence belongs to the cyanase family.

It carries out the reaction cyanate + hydrogencarbonate + 3 H(+) = NH4(+) + 2 CO2. Functionally, catalyzes the reaction of cyanate with bicarbonate to produce ammonia and carbon dioxide. This is Cyanate hydratase from Penicillium rubens (strain ATCC 28089 / DSM 1075 / NRRL 1951 / Wisconsin 54-1255) (Penicillium chrysogenum).